The chain runs to 184 residues: ATP synthase subunit b, chloroplastic (184 aa).

A helical transmembrane segment spans residues 27–49; the sequence is LATNPINLSVVFGVLIFFGKGVL.

It belongs to the ATPase B chain family. F-type ATPases have 2 components, F(1) - the catalytic core - and F(0) - the membrane proton channel. F(1) has five subunits: alpha(3), beta(3), gamma(1), delta(1), epsilon(1). F(0) has four main subunits: a(1), b(1), b'(1) and c(10-14). The alpha and beta chains form an alternating ring which encloses part of the gamma chain. F(1) is attached to F(0) by a central stalk formed by the gamma and epsilon chains, while a peripheral stalk is formed by the delta, b and b' chains.

Its subcellular location is the plastid. It is found in the chloroplast thylakoid membrane. Its function is as follows. F(1)F(0) ATP synthase produces ATP from ADP in the presence of a proton or sodium gradient. F-type ATPases consist of two structural domains, F(1) containing the extramembraneous catalytic core and F(0) containing the membrane proton channel, linked together by a central stalk and a peripheral stalk. During catalysis, ATP synthesis in the catalytic domain of F(1) is coupled via a rotary mechanism of the central stalk subunits to proton translocation. Component of the F(0) channel, it forms part of the peripheral stalk, linking F(1) to F(0). The chain is ATP synthase subunit b, chloroplastic from Olimarabidopsis pumila (Dwarf rocket).